A 113-amino-acid polypeptide reads, in one-letter code: Large ribosomal subunit protein bL17 (113 aa).

It belongs to the bacterial ribosomal protein bL17 family. Part of the 50S ribosomal subunit. Contacts protein L32.

In Clostridium perfringens (strain ATCC 13124 / DSM 756 / JCM 1290 / NCIMB 6125 / NCTC 8237 / Type A), this protein is Large ribosomal subunit protein bL17.